We begin with the raw amino-acid sequence, 1435 residues long: Dicer-like protein 2 (1435 aa).

The Helicase ATP-binding domain occupies 54 to 234 (MLSESLRQNI…LEVLEINLNA (181 aa)). 67–74 (MDTGSGKT) provides a ligand contact to ATP. Residues 175–178 (DEAH) carry the DEAH box motif. One can recognise a Helicase C-terminal domain in the interval 400 to 564 (KLIDFLVLEH…ENKRALEHIQ (165 aa)). The Dicer dsRNA-binding fold domain maps to 591-684 (ARNHLSHFCG…MPAHHHIDDE (94 aa)). RNase III domains lie at 956-1099 (ANEL…IDGG) and 1141-1323 (LSEI…IDSQ). Mg(2+)-binding residues include E1178, D1309, and E1312.

The protein belongs to the helicase family. Dicer subfamily. Mg(2+) serves as cofactor. Mn(2+) is required as a cofactor.

Dicer-like endonuclease involved in cleaving double-stranded RNA in the RNA interference (RNAi) pathway. Produces 21 to 25 bp dsRNAs (siRNAs) which target the selective destruction of homologous RNAs leading to sequence-specific suppression of gene expression, called post-transcriptional gene silencing (PTGS). Part of a broad host defense response against viral infection and transposons. This is Dicer-like protein 2 (DCL2) from Coccidioides immitis (strain RS) (Valley fever fungus).